Here is a 273-residue protein sequence, read N- to C-terminus: NH(3)-dependent NAD(+) synthetase (273 aa).

46-53 is a binding site for ATP; that stretch reads GISGGQDS. Position 52 (D52) interacts with Mg(2+). Residue R139 coordinates deamido-NAD(+). T159 provides a ligand contact to ATP. Position 164 (E164) interacts with Mg(2+). Deamido-NAD(+)-binding residues include K172 and D179. 2 residues coordinate ATP: K188 and T210. Residue 259 to 260 participates in deamido-NAD(+) binding; the sequence is HK.

It belongs to the NAD synthetase family. As to quaternary structure, homodimer.

The catalysed reaction is deamido-NAD(+) + NH4(+) + ATP = AMP + diphosphate + NAD(+) + H(+). It functions in the pathway cofactor biosynthesis; NAD(+) biosynthesis; NAD(+) from deamido-NAD(+) (ammonia route): step 1/1. In terms of biological role, catalyzes the ATP-dependent amidation of deamido-NAD to form NAD. Uses ammonia as a nitrogen source. In Streptococcus agalactiae serotype Ia (strain ATCC 27591 / A909 / CDC SS700), this protein is NH(3)-dependent NAD(+) synthetase.